Here is a 100-residue protein sequence, read N- to C-terminus: Large ribosomal subunit protein uL23 (100 aa).

This sequence belongs to the universal ribosomal protein uL23 family. Part of the 50S ribosomal subunit. Contacts protein L29, and trigger factor when it is bound to the ribosome.

One of the early assembly proteins it binds 23S rRNA. One of the proteins that surrounds the polypeptide exit tunnel on the outside of the ribosome. Forms the main docking site for trigger factor binding to the ribosome. The polypeptide is Large ribosomal subunit protein uL23 (Shewanella halifaxensis (strain HAW-EB4)).